We begin with the raw amino-acid sequence, 923 residues long: Serine/threonine-protein phosphatase 6 regulatory subunit 2 (923 aa).

Serine 289 carries the phosphoserine modification. 3 disordered regions span residues 409-441 (EASG…SPPE), 662-685 (VPGL…DSAG), and 743-766 (RCSS…PEKT). Residues 430–441 (LETTPSITSPPE) are compositionally biased toward polar residues. Phosphoserine occurs at positions 746 and 796.

The protein belongs to the SAPS family. In terms of assembly, protein phosphatase 6 (PP6) holoenzyme is proposed to be a heterotrimeric complex formed by the catalytic subunit, a SAPS domain-containing subunit (PP6R) and an ankyrin repeat-domain containing regulatory subunit (ARS). Interacts with PPP6C and NFKBIE. Interacts with ANKRD28. In terms of tissue distribution, strongest expression in bladder and lower levels found in heart and pancreas. Very weak expression observed in all other tissues tested.

The protein resides in the cytoplasm. In terms of biological role, regulatory subunit of protein phosphatase 6 (PP6). May function as a scaffolding PP6 subunit. Involved in the PP6-mediated dephosphorylation of NFKBIE opposing its degradation in response to TNF-alpha. This is Serine/threonine-protein phosphatase 6 regulatory subunit 2 (Ppp6r2) from Mus musculus (Mouse).